The primary structure comprises 299 residues: Tyrosine recombinase XerC (299 aa).

A Core-binding (CB) domain is found at 1–85 (MKRQLEAYCA…AVRGLYRYLN (85 aa)). A Tyr recombinase domain is found at 106 to 285 (RLPKVLDTDR…DFQHLAAVYD (180 aa)). Residues R146, K170, H237, R240, and H263 contribute to the active site. The active-site O-(3'-phospho-DNA)-tyrosine intermediate is the Y272.

Belongs to the 'phage' integrase family. XerC subfamily. In terms of assembly, forms a cyclic heterotetrameric complex composed of two molecules of XerC and two molecules of XerD.

It is found in the cytoplasm. In terms of biological role, site-specific tyrosine recombinase, which acts by catalyzing the cutting and rejoining of the recombining DNA molecules. The XerC-XerD complex is essential to convert dimers of the bacterial chromosome into monomers to permit their segregation at cell division. It also contributes to the segregational stability of plasmids. In Pseudomonas putida (strain ATCC 47054 / DSM 6125 / CFBP 8728 / NCIMB 11950 / KT2440), this protein is Tyrosine recombinase XerC.